We begin with the raw amino-acid sequence, 230 residues long: Agamous-like MADS-box protein AGL11 (230 aa).

Residues 3-57 enclose the MADS-box domain; it reads RGKIEIKRIENSTNRQVTFCKRRNGLLKKAYELSVLCDAEVALIVFSTRGRLYEY. In terms of domain architecture, K-box spans 87–177; that stretch reads AAYYQQESAK…RTKVAEVERY (91 aa). Residues 211 to 230 are disordered; it reads SGSGNGGSYSDPDKKILHLG. Residues 221–230 are compositionally biased toward basic and acidic residues; the sequence is DPDKKILHLG.

In terms of assembly, interacts with AGL15 and AGL16.

It is found in the nucleus. Probable transcription factor. Is required, together with TT16/AGL32 for the maternal control of endothelium formation, which is essential for female gametophyte development and fertilization, and seed formation. The polypeptide is Agamous-like MADS-box protein AGL11 (AGL11) (Arabidopsis thaliana (Mouse-ear cress)).